Reading from the N-terminus, the 68-residue chain is Large ribosomal subunit protein uL30 (68 aa).

Belongs to the universal ribosomal protein uL30 family. Part of the 50S ribosomal subunit.

This chain is Large ribosomal subunit protein uL30, found in Pseudarthrobacter chlorophenolicus (strain ATCC 700700 / DSM 12829 / CIP 107037 / JCM 12360 / KCTC 9906 / NCIMB 13794 / A6) (Arthrobacter chlorophenolicus).